The following is a 745-amino-acid chain: Junction plakoglobin (745 aa).

Position 1 is an N-acetylmethionine (Met1). Residue Thr14 is glycosylated (O-linked (GlcNAc) threonine). Residues Ser99 and Ser125 each carry the phosphoserine modification. 12 ARM repeats span residues 132–171 (NYQD…QLSK), 172–215 (KEAS…LSHH), 216–255 (REGL…NLLL), 258–297 (EGAK…LLAY), 298–341 (GNQE…LSVC), 342–381 (PSNK…NLSD), 383–420 (ATKQ…NLTC), 423–464 (SKNK…HLTS), 470–510 (EMAQ…NLAL), 512–551 (PANH…QPYT), 574–613 (PMNR…ELAQ), and 615–661 (KEAA…PDYR). The interaction with DSC1 and DSG1 stretch occupies residues 132-297 (NYQDDAELAT…TTDCLQLLAY (166 aa)). Residue Ser182 is modified to Phosphoserine. The segment at 574–661 (PMNRMEIFRL…ISEDKNPDYR (88 aa)) is interaction with DSC1. 2 positions are modified to phosphoserine: Ser665 and Ser730.

It belongs to the beta-catenin family. Homodimer. Component of an E-cadherin/catenin adhesion complex composed of at least E-cadherin/CDH1 and gamma-catenin/JUP, and possibly alpha-catenin/CTNNA1; the complex is located to adherens junctions. The stable association of CTNNA1 is controversial as CTNNA1 was shown not to bind to F-actin when assembled in the complex. Interacts with MUC1. Interacts with CAV1. Interacts with PTPRJ. Interacts with DSG1. Interacts with DSC1 and DSC2. Interacts with PKP2. Interacts with PKP3 (via N-terminus); the interaction is required for PKP3 localization to desmosome cell-cell junctions. Interacts with DSG4. May be phosphorylated by FER. In terms of tissue distribution, expressed in the heart (at protein level).

The protein localises to the cell junction. It is found in the adherens junction. It localises to the desmosome. The protein resides in the cytoplasm. Its subcellular location is the cytoskeleton. The protein localises to the cell membrane. It is found in the nucleus. Its function is as follows. Common junctional plaque protein. The membrane-associated plaques are architectural elements in an important strategic position to influence the arrangement and function of both the cytoskeleton and the cells within the tissue. The presence of plakoglobin in both the desmosomes and in the intermediate junctions suggests that it plays a central role in the structure and function of submembranous plaques. Acts as a substrate for VE-PTP and is required by it to stimulate VE-cadherin function in endothelial cells. Can replace beta-catenin in E-cadherin/catenin adhesion complexes which are proposed to couple cadherins to the actin cytoskeleton. This Rattus norvegicus (Rat) protein is Junction plakoglobin.